We begin with the raw amino-acid sequence, 169 residues long: Deoxyuridine 5'-triphosphate nucleotidohydrolase (169 aa).

A compositionally biased stretch (polar residues) spans Met1–Glu10. Residues Met1–Glu25 are disordered. Substrate is bound by residues Arg91–Gly93, Gly105–Asp108, Gly116, Arg159, and Phe164–Gly165.

It belongs to the dUTPase family. As to quaternary structure, homodimer. Mg(2+) is required as a cofactor. In terms of tissue distribution, vegetative and floral merismatic cells and provascular and vascular merismatic derivatives.

The enzyme catalyses dUTP + H2O = dUMP + diphosphate + H(+). It participates in pyrimidine metabolism; dUMP biosynthesis; dUMP from dCTP (dUTP route): step 2/2. Functionally, this enzyme is involved in nucleotide metabolism: it produces dUMP, the immediate precursor of thymidine nucleotides and it decreases the intracellular concentration of dUTP so that uracil cannot be incorporated into DNA. It may have as well a metabolic role in merismatic cells. The protein is Deoxyuridine 5'-triphosphate nucleotidohydrolase of Solanum lycopersicum (Tomato).